Reading from the N-terminus, the 298-residue chain is MAYRAGFVALIGRTNVGKSTLLNAILKEKVAITSPKPQTTRNTIRGILTTEDYQIIFVDTPGIHKPKSKLSEFMIEVAKRTLKDVDLILYMVEPDTSIGPGDRYILDNLKEVDTPVILVVNKIDLVPAERVEEAIKVFKSEYNFKDVVAISASLGTNVEVLKEKIVSFLPEGPRYYLDDYITDQPEKLIVAEIIREKMLYFLEEEVPHGVYVEVESIKEREDKEIVDIDAYIYCEKESHKGIIIGKNGQMLKKIGQAARQDLEEFYGKQVFLQLWVKVRKGWRDNEKLLRKLGYAIDK.

Residues 4 to 171 form the Era-type G domain; the sequence is RAGFVALIGR…KEKIVSFLPE (168 aa). Residues 12–19 are G1; sequence GRTNVGKS. 12-19 is a binding site for GTP; it reads GRTNVGKS. Positions 38–42 are G2; that stretch reads QTTRN. A G3 region spans residues 59-62; it reads DTPG. Residues 59-63 and 121-124 contribute to the GTP site; these read DTPGI and NKID. The segment at 121-124 is G4; it reads NKID. Residues 150-152 form a G5 region; that stretch reads ISA. The 79-residue stretch at 202-280 folds into the KH type-2 domain; sequence LEEEVPHGVY…FLQLWVKVRK (79 aa).

The protein belongs to the TRAFAC class TrmE-Era-EngA-EngB-Septin-like GTPase superfamily. Era GTPase family. Monomer.

It is found in the cytoplasm. Its subcellular location is the cell membrane. An essential GTPase that binds both GDP and GTP, with rapid nucleotide exchange. Plays a role in 16S rRNA processing and 30S ribosomal subunit biogenesis and possibly also in cell cycle regulation and energy metabolism. This is GTPase Era from Caldanaerobacter subterraneus subsp. tengcongensis (strain DSM 15242 / JCM 11007 / NBRC 100824 / MB4) (Thermoanaerobacter tengcongensis).